A 451-amino-acid chain; its full sequence is MGRRYFGTDGIRGTVGDTPITPDFVLRLGYAAGKVLAGAADGATGARPTVLIGKDTRVSGYMLEAALEAGFSAAGVDVMLAGPMPTPGVAYLTRALRLSAGVVISASHNPYQDNGIKFFSADGNKLPDETEAEIEAWLDKPLECASSDRLGKARRLDDAAGRYIEFCKSTFPAAYDLRGLKLVIDCAHGAAYQIAPHVFHELGADVIPIGVAPNGFNINDGVGATAPDALVRAVRANHADLGIALDGDADRLQVVDSSGRLFNGDELLYVLVKDRIATAGKVEGAVGTLMTNLAVEVALQREGVEFVRAAVGDRYVLEQLRERGWQLGAEGSGHILSLDRHSTGDGIVSALLVLAALKRSGRTLAQMLDGVTLFPQKLINVRMKPGADWKGSASIRAAIDAAESALAGHGRVLIRASGTEPVLRVMVEAQQAADATRHAEAIADAVREATS.

Serine 107 functions as the Phosphoserine intermediate in the catalytic mechanism. Mg(2+)-binding residues include serine 107, aspartate 246, aspartate 248, and aspartate 250. A Phosphoserine modification is found at serine 107.

It belongs to the phosphohexose mutase family. Mg(2+) serves as cofactor. Activated by phosphorylation.

It catalyses the reaction alpha-D-glucosamine 1-phosphate = D-glucosamine 6-phosphate. Functionally, catalyzes the conversion of glucosamine-6-phosphate to glucosamine-1-phosphate. This is Phosphoglucosamine mutase from Burkholderia vietnamiensis (strain G4 / LMG 22486) (Burkholderia cepacia (strain R1808)).